Reading from the N-terminus, the 471-residue chain is ATP synthase subunit beta (471 aa).

156–163 (GGAGVGKT) lines the ATP pocket.

The protein belongs to the ATPase alpha/beta chains family. F-type ATPases have 2 components, CF(1) - the catalytic core - and CF(0) - the membrane proton channel. CF(1) has five subunits: alpha(3), beta(3), gamma(1), delta(1), epsilon(1). CF(0) has three main subunits: a(1), b(2) and c(9-12). The alpha and beta chains form an alternating ring which encloses part of the gamma chain. CF(1) is attached to CF(0) by a central stalk formed by the gamma and epsilon chains, while a peripheral stalk is formed by the delta and b chains.

It is found in the cell inner membrane. The enzyme catalyses ATP + H2O + 4 H(+)(in) = ADP + phosphate + 5 H(+)(out). Produces ATP from ADP in the presence of a proton gradient across the membrane. The catalytic sites are hosted primarily by the beta subunits. This chain is ATP synthase subunit beta, found in Nitratidesulfovibrio vulgaris (strain DSM 19637 / Miyazaki F) (Desulfovibrio vulgaris).